The primary structure comprises 86 residues: Small ribosomal subunit protein uS17 (86 aa).

The protein belongs to the universal ribosomal protein uS17 family. Part of the 30S ribosomal subunit.

Its function is as follows. One of the primary rRNA binding proteins, it binds specifically to the 5'-end of 16S ribosomal RNA. The protein is Small ribosomal subunit protein uS17 of Helicobacter acinonychis (strain Sheeba).